A 159-amino-acid polypeptide reads, in one-letter code: RNA pyrophosphohydrolase (159 aa).

A Nudix hydrolase domain is found at 6-149 (GFRPNVGIIL…KREVYRRALK (144 aa)). The Nudix box motif lies at 38 to 59 (GGINPQETPEDALYRELNEEVG).

The protein belongs to the Nudix hydrolase family. RppH subfamily. It depends on a divalent metal cation as a cofactor.

Accelerates the degradation of transcripts by removing pyrophosphate from the 5'-end of triphosphorylated RNA, leading to a more labile monophosphorylated state that can stimulate subsequent ribonuclease cleavage. This is RNA pyrophosphohydrolase from Pseudomonas savastanoi pv. phaseolicola (strain 1448A / Race 6) (Pseudomonas syringae pv. phaseolicola (strain 1448A / Race 6)).